The chain runs to 149 residues: 3-hydroxyacyl-[acyl-carrier-protein] dehydratase FabZ (149 aa).

The active site involves His-47.

Belongs to the thioester dehydratase family. FabZ subfamily.

It is found in the cytoplasm. It carries out the reaction a (3R)-hydroxyacyl-[ACP] = a (2E)-enoyl-[ACP] + H2O. Involved in unsaturated fatty acids biosynthesis. Catalyzes the dehydration of short chain beta-hydroxyacyl-ACPs and long chain saturated and unsaturated beta-hydroxyacyl-ACPs. This Thioalkalivibrio sulfidiphilus (strain HL-EbGR7) protein is 3-hydroxyacyl-[acyl-carrier-protein] dehydratase FabZ.